The sequence spans 673 residues: UvrABC system protein B (673 aa).

One can recognise a Helicase ATP-binding domain in the interval 26 to 183 (EGLEDGLAHQ…RRLAELQYTR (158 aa)). 39–46 (GVTGSGKT) lines the ATP pocket. Positions 92-115 (YYDYYQPEAYVPSSDTFIEKDASV) match the Beta-hairpin motif. Residues 431–597 (QVDDLLSEIR…GLNKKVVDIL (167 aa)) enclose the Helicase C-terminal domain. A disordered region spans residues 608 to 627 (AKGRGKSRPIVEPDNVPMDM). One can recognise a UVR domain in the interval 633–668 (QQKIHELEGLMMQHAQNLEFEEAAQIRDQLHQLREL).

This sequence belongs to the UvrB family. As to quaternary structure, forms a heterotetramer with UvrA during the search for lesions. Interacts with UvrC in an incision complex.

It is found in the cytoplasm. In terms of biological role, the UvrABC repair system catalyzes the recognition and processing of DNA lesions. A damage recognition complex composed of 2 UvrA and 2 UvrB subunits scans DNA for abnormalities. Upon binding of the UvrA(2)B(2) complex to a putative damaged site, the DNA wraps around one UvrB monomer. DNA wrap is dependent on ATP binding by UvrB and probably causes local melting of the DNA helix, facilitating insertion of UvrB beta-hairpin between the DNA strands. Then UvrB probes one DNA strand for the presence of a lesion. If a lesion is found the UvrA subunits dissociate and the UvrB-DNA preincision complex is formed. This complex is subsequently bound by UvrC and the second UvrB is released. If no lesion is found, the DNA wraps around the other UvrB subunit that will check the other stand for damage. The polypeptide is UvrABC system protein B (Escherichia fergusonii (strain ATCC 35469 / DSM 13698 / CCUG 18766 / IAM 14443 / JCM 21226 / LMG 7866 / NBRC 102419 / NCTC 12128 / CDC 0568-73)).